The following is a 363-amino-acid chain: DNA replication and repair protein RecF (363 aa).

30-37 is an ATP binding site; it reads GPNGSGKT.

Belongs to the RecF family.

It is found in the cytoplasm. Its function is as follows. The RecF protein is involved in DNA metabolism; it is required for DNA replication and normal SOS inducibility. RecF binds preferentially to single-stranded, linear DNA. It also seems to bind ATP. This chain is DNA replication and repair protein RecF, found in Chlorobium limicola (strain DSM 245 / NBRC 103803 / 6330).